The following is a 313-amino-acid chain: 4-diphosphocytidyl-2-C-methyl-D-erythritol kinase (313 aa).

The active site involves K10. Residue 95–105 (PVTAGLGGGSS) participates in ATP binding. Residue D136 is part of the active site. A disordered region spans residues 289–313 (HPRVSPWRSPRSASSRSTRRSSRPT). Positions 292–304 (VSPWRSPRSASSR) are enriched in low complexity.

This sequence belongs to the GHMP kinase family. IspE subfamily.

The catalysed reaction is 4-CDP-2-C-methyl-D-erythritol + ATP = 4-CDP-2-C-methyl-D-erythritol 2-phosphate + ADP + H(+). The protein operates within isoprenoid biosynthesis; isopentenyl diphosphate biosynthesis via DXP pathway; isopentenyl diphosphate from 1-deoxy-D-xylulose 5-phosphate: step 3/6. Catalyzes the phosphorylation of the position 2 hydroxy group of 4-diphosphocytidyl-2C-methyl-D-erythritol. The sequence is that of 4-diphosphocytidyl-2-C-methyl-D-erythritol kinase from Anaeromyxobacter sp. (strain K).